Consider the following 547-residue polypeptide: Glucose-6-phosphate isomerase (547 aa).

Glu351 (proton donor) is an active-site residue. Catalysis depends on residues His382 and Lys509.

The protein belongs to the GPI family.

The protein localises to the cytoplasm. The enzyme catalyses alpha-D-glucose 6-phosphate = beta-D-fructose 6-phosphate. Its pathway is carbohydrate biosynthesis; gluconeogenesis. It functions in the pathway carbohydrate degradation; glycolysis; D-glyceraldehyde 3-phosphate and glycerone phosphate from D-glucose: step 2/4. Its function is as follows. Catalyzes the reversible isomerization of glucose-6-phosphate to fructose-6-phosphate. This Coxiella burnetii (strain Dugway 5J108-111) protein is Glucose-6-phosphate isomerase.